The sequence spans 157 residues: SsrA-binding protein (157 aa).

Belongs to the SmpB family.

It is found in the cytoplasm. Its function is as follows. Required for rescue of stalled ribosomes mediated by trans-translation. Binds to transfer-messenger RNA (tmRNA), required for stable association of tmRNA with ribosomes. tmRNA and SmpB together mimic tRNA shape, replacing the anticodon stem-loop with SmpB. tmRNA is encoded by the ssrA gene; the 2 termini fold to resemble tRNA(Ala) and it encodes a 'tag peptide', a short internal open reading frame. During trans-translation Ala-aminoacylated tmRNA acts like a tRNA, entering the A-site of stalled ribosomes, displacing the stalled mRNA. The ribosome then switches to translate the ORF on the tmRNA; the nascent peptide is terminated with the 'tag peptide' encoded by the tmRNA and targeted for degradation. The ribosome is freed to recommence translation, which seems to be the essential function of trans-translation. This chain is SsrA-binding protein, found in Syntrophomonas wolfei subsp. wolfei (strain DSM 2245B / Goettingen).